The chain runs to 499 residues: Maturase K (499 aa).

Belongs to the intron maturase 2 family. MatK subfamily.

It is found in the plastid. The protein resides in the chloroplast. In terms of biological role, usually encoded in the trnK tRNA gene intron. Probably assists in splicing its own and other chloroplast group II introns. In Chamaecrista fasciculata (Showy partridge pea), this protein is Maturase K.